The primary structure comprises 303 residues: 4-hydroxy-3-methylbut-2-enyl diphosphate reductase (303 aa).

Cys12 is a binding site for [4Fe-4S] cluster. (2E)-4-hydroxy-3-methylbut-2-enyl diphosphate contacts are provided by His42 and His75. The dimethylallyl diphosphate site is built by His42 and His75. The isopentenyl diphosphate site is built by His42 and His75. Cys97 lines the [4Fe-4S] cluster pocket. His125 is a (2E)-4-hydroxy-3-methylbut-2-enyl diphosphate binding site. Residue His125 participates in dimethylallyl diphosphate binding. His125 is an isopentenyl diphosphate binding site. Catalysis depends on Glu127, which acts as the Proton donor. Residue Ser164 coordinates (2E)-4-hydroxy-3-methylbut-2-enyl diphosphate. Position 192 (Cys192) interacts with [4Fe-4S] cluster. (2E)-4-hydroxy-3-methylbut-2-enyl diphosphate-binding residues include Ser220, Ser221, Asn222, and Ser264. Residues Ser220, Ser221, Asn222, and Ser264 each contribute to the dimethylallyl diphosphate site. Positions 220, 221, 222, and 264 each coordinate isopentenyl diphosphate.

This sequence belongs to the IspH family. The cofactor is [4Fe-4S] cluster.

It carries out the reaction isopentenyl diphosphate + 2 oxidized [2Fe-2S]-[ferredoxin] + H2O = (2E)-4-hydroxy-3-methylbut-2-enyl diphosphate + 2 reduced [2Fe-2S]-[ferredoxin] + 2 H(+). The catalysed reaction is dimethylallyl diphosphate + 2 oxidized [2Fe-2S]-[ferredoxin] + H2O = (2E)-4-hydroxy-3-methylbut-2-enyl diphosphate + 2 reduced [2Fe-2S]-[ferredoxin] + 2 H(+). Its pathway is isoprenoid biosynthesis; dimethylallyl diphosphate biosynthesis; dimethylallyl diphosphate from (2E)-4-hydroxy-3-methylbutenyl diphosphate: step 1/1. It functions in the pathway isoprenoid biosynthesis; isopentenyl diphosphate biosynthesis via DXP pathway; isopentenyl diphosphate from 1-deoxy-D-xylulose 5-phosphate: step 6/6. Its function is as follows. Catalyzes the conversion of 1-hydroxy-2-methyl-2-(E)-butenyl 4-diphosphate (HMBPP) into a mixture of isopentenyl diphosphate (IPP) and dimethylallyl diphosphate (DMAPP). Acts in the terminal step of the DOXP/MEP pathway for isoprenoid precursor biosynthesis. The protein is 4-hydroxy-3-methylbut-2-enyl diphosphate reductase of Neorickettsia sennetsu (strain ATCC VR-367 / Miyayama) (Ehrlichia sennetsu).